The primary structure comprises 327 residues: Protein-L-isoaspartate O-methyltransferase (327 aa).

Disordered stretches follow at residues 1–38 (MSGE…DAAR) and 62–105 (PRAA…KSAT). The span at 14–29 (EDLKREPRKPEGRAAE) shows a compositional bias: basic and acidic residues. Over residues 62–77 (PRAAGASGSGVPVAKP) the composition is skewed to low complexity. Polar residues predominate over residues 92-105 (APSSGVKNGDKSAT). S175 is a catalytic residue.

Belongs to the methyltransferase superfamily. L-isoaspartyl/D-aspartyl protein methyltransferase family.

The protein resides in the cytoplasm. It catalyses the reaction [protein]-L-isoaspartate + S-adenosyl-L-methionine = [protein]-L-isoaspartate alpha-methyl ester + S-adenosyl-L-homocysteine. Catalyzes the methyl esterification of L-isoaspartyl residues in peptides and proteins that result from spontaneous decomposition of normal L-aspartyl and L-asparaginyl residues. It plays a role in the repair and/or degradation of damaged proteins. The protein is Protein-L-isoaspartate O-methyltransferase of Burkholderia thailandensis (strain ATCC 700388 / DSM 13276 / CCUG 48851 / CIP 106301 / E264).